The chain runs to 106 residues: UPF0145 protein TM_0763 (106 aa).

This sequence belongs to the UPF0145 family.

The sequence is that of UPF0145 protein TM_0763 from Thermotoga maritima (strain ATCC 43589 / DSM 3109 / JCM 10099 / NBRC 100826 / MSB8).